A 228-amino-acid chain; its full sequence is Ribonuclease S-4 (228 aa).

The N-terminal stretch at 1-27 (MGITGMTYMFTMVLSLIVLIFSASTVG) is a signal peptide. Q36 lines the RNA pocket. Residues C42 and C49 are joined by a disulfide bond. H60 lines the RNA pocket. H60 (proton donor) is an active-site residue. C75 and C119 are joined by a disulfide. N-linked (GlcNAc) asparagine glycosylation is present at N87. Position 98 to 99 (98 to 99 (NV)) interacts with RNA. The N-linked (GlcNAc...) asparagine glycan is linked to N101. Residues F108, 111 to 112 (RE), and 115 to 116 (KH) each bind RNA. The active site involves E112. H116 (proton acceptor) is an active-site residue. N-linked (GlcNAc...) asparagine glycosylation is found at N144, N160, and N175. Disulfide bonds link C183-C222 and C199-C210.

It belongs to the RNase T2 family. In terms of processing, the N-glycans attached at Asn-101, Asn-160 and Asn-175 consist predominantly of disaccharide (GlcNAc-GlcNAc). The N-glycan at 87 is 53% monosaccharide and 47% disaccharide. The N-glycan at Asn-144 contains mannose and xylose.

It is found in the secreted. The protein localises to the extracellular space. The catalysed reaction is a ribonucleotidyl-ribonucleotide-RNA + H2O = a 3'-end 3'-phospho-ribonucleotide-RNA + a 5'-end dephospho-ribonucleoside-RNA + H(+). In terms of biological role, self-incompatibility (SI) is the inherited ability of a flowering plant to prevent self-fertilization by discriminating between self and non-self pollen during pollination. In many species, self-incompatibility is controlled by the single, multiallelic locus S. This chain is Ribonuclease S-4, found in Pyrus pyrifolia (Chinese pear).